We begin with the raw amino-acid sequence, 540 residues long: Testis-specific chromodomain protein Y 1 (540 aa).

One can recognise a Chromo domain in the interval 6 to 66 (FEVEAIVDKR…RQTEKQKKLT (61 aa)). The disordered stretch occupies residues 76–106 (NNARRRTSRSTKANYSKNSPKTPVTDKHHRS). Over residues 87 to 97 (KANYSKNSPKT) the composition is skewed to polar residues.

Interacts (via chromo domain) with histone H3K9me3. In terms of tissue distribution, testis-specific. Detected in spermatids (at protein level).

Its subcellular location is the nucleus. The catalysed reaction is L-lysyl-[protein] + acetyl-CoA = N(6)-acetyl-L-lysyl-[protein] + CoA + H(+). In terms of biological role, has histone acetyltransferase activity, with a preference for histone H4. The protein is Testis-specific chromodomain protein Y 1 (CDY1) of Homo sapiens (Human).